The chain runs to 184 residues: Photosystem I assembly protein Ycf4 (184 aa).

2 helical membrane-spanning segments follow: residues 19 to 39 and 57 to 77; these read ISNF…LLVG and IIFF…LFIS.

The protein belongs to the Ycf4 family.

The protein resides in the plastid. Its subcellular location is the chloroplast thylakoid membrane. Its function is as follows. Seems to be required for the assembly of the photosystem I complex. The polypeptide is Photosystem I assembly protein Ycf4 (Nicotiana sylvestris (Wood tobacco)).